A 469-amino-acid chain; its full sequence is Putative dipeptidase SAR1836 (469 aa).

Zn(2+) is bound at residue H84. Residue D86 is part of the active site. D115 is a Zn(2+) binding site. Catalysis depends on E149, which acts as the Proton acceptor. 3 residues coordinate Zn(2+): E150, D173, and H440.

Belongs to the peptidase M20A family. Zn(2+) is required as a cofactor.

In Staphylococcus aureus (strain MRSA252), this protein is Putative dipeptidase SAR1836.